The following is a 288-amino-acid chain: Diaminopimelate epimerase (288 aa).

The substrate site is built by N13, Q46, and N66. C75 acts as the Proton donor in catalysis. Substrate-binding positions include 76–77 (GN), N166, N199, and 217–218 (ER). The active-site Proton acceptor is C226. Substrate is bound at residue 227–228 (GT).

This sequence belongs to the diaminopimelate epimerase family. Homodimer.

The protein resides in the cytoplasm. It carries out the reaction (2S,6S)-2,6-diaminopimelate = meso-2,6-diaminopimelate. The protein operates within amino-acid biosynthesis; L-lysine biosynthesis via DAP pathway; DL-2,6-diaminopimelate from LL-2,6-diaminopimelate: step 1/1. In terms of biological role, catalyzes the stereoinversion of LL-2,6-diaminopimelate (L,L-DAP) to meso-diaminopimelate (meso-DAP), a precursor of L-lysine and an essential component of the bacterial peptidoglycan. This Cupriavidus taiwanensis (strain DSM 17343 / BCRC 17206 / CCUG 44338 / CIP 107171 / LMG 19424 / R1) (Ralstonia taiwanensis (strain LMG 19424)) protein is Diaminopimelate epimerase.